A 445-amino-acid chain; its full sequence is Tubulin beta-3 chain (445 aa).

Residues Q11, E69, S138, G142, T143, G144, N204, and N226 each coordinate GTP. A Mg(2+)-binding site is contributed by E69. Residues 421-445 form a disordered region; that stretch reads EYQQYQDATADEEEEYDEEEEEEAA. The segment covering 429–445 has biased composition (acidic residues); the sequence is TADEEEEYDEEEEEEAA.

It belongs to the tubulin family. Dimer of alpha and beta chains. A typical microtubule is a hollow water-filled tube with an outer diameter of 25 nm and an inner diameter of 15 nM. Alpha-beta heterodimers associate head-to-tail to form protofilaments running lengthwise along the microtubule wall with the beta-tubulin subunit facing the microtubule plus end conferring a structural polarity. Microtubules usually have 13 protofilaments but different protofilament numbers can be found in some organisms and specialized cells. Mg(2+) serves as cofactor.

The protein resides in the cytoplasm. Its subcellular location is the cytoskeleton. Functionally, tubulin is the major constituent of microtubules, a cylinder consisting of laterally associated linear protofilaments composed of alpha- and beta-tubulin heterodimers. Microtubules grow by the addition of GTP-tubulin dimers to the microtubule end, where a stabilizing cap forms. Below the cap, tubulin dimers are in GDP-bound state, owing to GTPase activity of alpha-tubulin. This chain is Tubulin beta-3 chain (TUBB3), found in Triticum aestivum (Wheat).